The chain runs to 89 residues: DNA/RNA-binding protein Alba 2 (89 aa).

Lys-12 is subject to N6-acetyllysine. The Zn(2+) site is built by Lys-14, Asp-18, and Asp-22.

It belongs to the histone-like Alba family. As to quaternary structure, forms homodimers and homotetramers. Homodimer at pH below 6.0. Forms homotetramers and higher order homooligomers at near the growth temperature of 80 degrees Celsius and pH 7.0. Interacts with Alba 1; heterodimers lack cooperative DNA-binding behavior and result in more compact chromatin structures compared to Alba 1 homodimers. Post-translationally, acetylated. Acetylation at Lys-12 decreases DNA-binding affinity.

It localises to the cytoplasm. The protein resides in the chromosome. Its function is as follows. Binds single-stranded DNA, RNA and double-stranded DNA. Involved in DNA compaction. The sequence is that of DNA/RNA-binding protein Alba 2 from Saccharolobus solfataricus (strain ATCC 35092 / DSM 1617 / JCM 11322 / P2) (Sulfolobus solfataricus).